Reading from the N-terminus, the 461-residue chain is Cysteine--tRNA ligase (461 aa).

A Zn(2+)-binding site is contributed by Cys30. Positions 32-42 match the 'HIGH' region motif; the sequence is VTVYDLCHIGH. Zn(2+)-binding residues include Cys211, His236, and Glu240. Positions 268–272 match the 'KMSKS' region motif; that stretch reads KMSKS. Lys271 contributes to the ATP binding site.

It belongs to the class-I aminoacyl-tRNA synthetase family. As to quaternary structure, monomer. Zn(2+) serves as cofactor.

It is found in the cytoplasm. It catalyses the reaction tRNA(Cys) + L-cysteine + ATP = L-cysteinyl-tRNA(Cys) + AMP + diphosphate. In Shewanella sp. (strain ANA-3), this protein is Cysteine--tRNA ligase.